The following is a 364-amino-acid chain: Fructose-bisphosphate aldolase C (364 aa).

Tyr5 is modified (phosphotyrosine). Ser36, Ser39, and Ser45 each carry phosphoserine. Arg56 is a substrate binding site. Position 111 is an N6-acetyllysine (Lys111). Ser132 carries the phosphoserine modification. Residue Lys147 participates in substrate binding. The active-site Proton acceptor is Glu188. The active-site Schiff-base intermediate with dihydroxyacetone-P is Lys230.

It belongs to the class I fructose-bisphosphate aldolase family. Homotetramer. Interacts with ATP6V1E1.

It carries out the reaction beta-D-fructose 1,6-bisphosphate = D-glyceraldehyde 3-phosphate + dihydroxyacetone phosphate. The protein operates within carbohydrate degradation; glycolysis; D-glyceraldehyde 3-phosphate and glycerone phosphate from D-glucose: step 4/4. This Pan troglodytes (Chimpanzee) protein is Fructose-bisphosphate aldolase C (ALDOC).